The chain runs to 235 residues: MLLNTPAQLSLPLYLPDDETFASFYPGENPSLLAAIQSAVHQPHGSYIYFWSREGGGRSHLLHAACAELSQQGEAVGYVPLDKRAYFIPEVLEGMEQLALVCIDNIECIAGDEQWEMAMFNLYNRIVETGRTRLLITGDRPPRQLNLGLPDLASRLDWGQIYKLQPLSDDEKLQALQLRAKLRGFELPEDVGRFLLKRLDREMRTLFMTLDQLDRASITAQRKLTIPFVKEILSL.

This sequence belongs to the DnaA family. HdA subfamily. In terms of assembly, the active form seems to be an ADP-bound monomer. Forms the RIDA complex (regulatory inactivation of DnaA) of ATP-DnaA, ADP-Hda and the DNA-loaded beta sliding clamp (dnaN).

Functionally, mediates the interaction of DNA replication initiator protein DnaA with DNA polymerase subunit beta sliding clamp (dnaN). Stimulates hydrolysis of ATP-DnaA to ADP-DnaA, rendering DnaA inactive for reinitiation, a process called regulatory inhibition of DnaA or RIDA. In Yersinia pestis bv. Antiqua (strain Antiqua), this protein is DnaA regulatory inactivator Hda.